Reading from the N-terminus, the 234-residue chain is tRNA1(Val) (adenine(37)-N6)-methyltransferase (234 aa).

It belongs to the methyltransferase superfamily. tRNA (adenine-N(6)-)-methyltransferase family.

The protein localises to the cytoplasm. It catalyses the reaction adenosine(37) in tRNA1(Val) + S-adenosyl-L-methionine = N(6)-methyladenosine(37) in tRNA1(Val) + S-adenosyl-L-homocysteine + H(+). Specifically methylates the adenine in position 37 of tRNA(1)(Val) (anticodon cmo5UAC). The protein is tRNA1(Val) (adenine(37)-N6)-methyltransferase of Flavobacterium psychrophilum (strain ATCC 49511 / DSM 21280 / CIP 103535 / JIP02/86).